We begin with the raw amino-acid sequence, 520 residues long: MTEISILNDVQKIIVLDYGSQYNQLIARRIREFGVFSELKSHKITAQELHEINPIGIVLSGGPNSVYADNAFGIDPEIFELGIPILGICYGMQLITHKLGGKVVPAGQAGNREYGQSTLHLRETSKLFSGTPQEQLVLMSHGDAVTEIPEGFHLVGDSNDCPYAAIENTEKNLYGIQFHPEVRHSVYGNDILKNFAISICGARGDWSMDNFIDMEITKIRETVGDRKVLLGLSGGVDSSVVGVLLQKAIGDQLTCIFVDHGLLRKDEGDQVMGMLGGKFGLNIIRVDASKRFLDLLADVEDPEKKRKIIGNEFVYVFDDEASKLKGVDFLAQGTLYTDIIESGTETAQTIKSHHNVGGLPEDMQFELIEPLNTLFKDEVRALGIALGMPEEIVWRQPFPGPGLAIRVMGAITEEKLETVRESDAILREEIAKAGLDRDVWQYFTVNTGVRSVGVMGDGRTYDYTIAIRAITSIDGMTADFAQLPWDVLKKISTRIVNEVDHVNRIVYDITSKPPATVEWE.

Residues 12-205 enclose the Glutamine amidotransferase type-1 domain; that stretch reads KIIVLDYGSQ…AISICGARGD (194 aa). The active-site Nucleophile is the Cys89. Residues His179 and Glu181 contribute to the active site. One can recognise a GMPS ATP-PPase domain in the interval 206–395; sequence WSMDNFIDME…LGMPEEIVWR (190 aa). 233–239 is an ATP binding site; it reads SGGVDSS.

Homodimer.

The enzyme catalyses XMP + L-glutamine + ATP + H2O = GMP + L-glutamate + AMP + diphosphate + 2 H(+). The protein operates within purine metabolism; GMP biosynthesis; GMP from XMP (L-Gln route): step 1/1. Catalyzes the synthesis of GMP from XMP. The polypeptide is GMP synthase [glutamine-hydrolyzing] (Streptococcus pyogenes serotype M3 (strain SSI-1)).